The sequence spans 75 residues: MIGDLLLFGTLLVNAGAVLNFKLKKKESQGFGDDLTEATTGDNIREFLLSLRYFRIFIALWNIFMMFCMIVLFGS.

The first 17 residues, 1 to 17 (MIGDLLLFGTLLVNAGA), serve as a signal peptide directing secretion. At 18–53 (VLNFKLKKKESQGFGDDLTEATTGDNIREFLLSLRY) the chain is on the extracellular side. The helical transmembrane segment at 54–74 (FRIFIALWNIFMMFCMIVLFG) threads the bilayer. Serine 75 is a topological domain (cytoplasmic).

The protein belongs to the SMIM7 family.

The protein localises to the membrane. This is Small integral membrane protein 7-A (smim7-a) from Xenopus laevis (African clawed frog).